The following is a 1340-amino-acid chain: Lysine-specific demethylase ELF6 (1340 aa).

The JmjN domain occupies Ala-16–Lys-57. Residues Gln-195–Asn-245 form a disordered region. The span at Asn-217–Lys-227 shows a compositional bias: basic and acidic residues. Residues Asn-262–Ala-428 form the JmjC domain. Residues His-305, Glu-307, and His-396 each contribute to the Fe cation site. The short motif at Gly-818–Ile-825 is the Nuclear localization signal 1 element. A disordered region spans residues Gly-1092 to Thr-1225. Residues Asp-1099 to Gln-1115 are compositionally biased toward polar residues. The span at Glu-1124–Thr-1133 shows a compositional bias: low complexity. The segment covering Ser-1188 to Pro-1201 has biased composition (basic and acidic residues). A compositionally biased stretch (polar residues) spans Gly-1215–Thr-1225. 4 C2H2-type zinc fingers span residues Asn-1228–Arg-1250, Asn-1251–His-1275, Phe-1281–His-1305, and Tyr-1311–His-1337. Positions 1230, 1235, 1248, 1253, 1258, 1265, 1271, 1275, 1283, 1288, 1301, 1305, 1313, 1318, 1331, and 1337 each coordinate Zn(2+). Positions His-1248–His-1255 match the Nuclear localization signal 2 motif. The segment at Lys-1260–Arg-1333 is DNA-binding.

This sequence belongs to the JHDM3 histone demethylase family. Interacts with BZR2 (via N-terminus). In terms of tissue distribution, expressed at low levels in seedlings, cotyledons and leaves. Detected in inflorescences, stems, roots and siliques but not in shoot apical meristems or root tips. Accumulates in flowers and embryos.

It is found in the nucleus. It carries out the reaction N(6),N(6),N(6)-trimethyl-L-lysyl(27)-[histone H3] + 2-oxoglutarate + O2 = N(6),N(6)-dimethyl-L-lysyl(27)-[histone H3] + formaldehyde + succinate + CO2. It catalyses the reaction N(6),N(6)-dimethyl-L-lysyl(27)-[histone H3] + 2-oxoglutarate + O2 = N(6)-methyl-L-lysyl(27)-[histone H3] + formaldehyde + succinate + CO2. Its function is as follows. Histone demethylase that demethylates 'Lys-27' (H3K27me) of histone H3, thus acting as a positive regulator of gene expression. Demethylates tri-methylated (H3K27me3) and di-methylated (H3K27me2) H3K27me. Inactive on H3K27me1, H3K4me3, H3K9me2 and H3K36me3. Acts as a repressor of the photoperiodic flowering pathway and of FT. May also be active on H3K4me. Binds around the transcription start site of the FT locus. Required for epigenetic reprogramming by resetting the expression of the floral repressor FLC locus, thus aluviating cold-mediated FLC epigenetically silencing occurring during vernalization and preventing inapropriate epigenetic states inheritence. Functionally, together with REF6, required for H3K27me3 resetting (especially in constitutive heterochromatin within the pericentromeric regions) and transgenerational inheritance of histone marks, thus acting in safeguarding genome and epigenome integrity during sexual reproduction. The sequence is that of Lysine-specific demethylase ELF6 from Arabidopsis thaliana (Mouse-ear cress).